The primary structure comprises 184 residues: Cyclin-dependent kinase inhibitor 1 (184 aa).

A compositionally biased stretch (low complexity) spans Ile-85–Thr-98. Residues Ile-85–Tyr-184 are disordered.

The protein belongs to the CDI family. Interacts with cyd-1; the interaction is direct. In embryos, expression is first seen in pharyngeal primordium and later in all differentiating cells. Post embryonic expression corresponds to developmental patterns of cell cycle progression in many tissues including sex myoblasts, distal tip cells, vulval cells, seam cells, neurons, intestine cells and hypodermal cells.

It localises to the nucleus. Its function is as follows. Negative cell-cycle regulator that functions at the G1-to-S-phase transition. Required for suspension of the cell cycle in dauer larvae and starved L1 larvae. In vulval precursor cells (VPCs), a pathway of heterochronic genes acts via cki-1 to maintain VPCs in G1 during the L2 larval stage. Cul-2 may function in ubiquitin-mediated degradation by targeting cki-1 for degradation. Involved in distal tip cell development by repressing and modulating cye-1/cdk-2 activity levels in Z1.aa/Z4.pp and in Z1.ap/Z4.pa. The sequence is that of Cyclin-dependent kinase inhibitor 1 from Caenorhabditis elegans.